The primary structure comprises 110 residues: UPF0122 protein SH1678 (110 aa).

Belongs to the UPF0122 family.

Might take part in the signal recognition particle (SRP) pathway. This is inferred from the conservation of its genetic proximity to ftsY/ffh. May be a regulatory protein. This is UPF0122 protein SH1678 from Staphylococcus haemolyticus (strain JCSC1435).